Consider the following 502-residue polypeptide: Membrane protein insertase YidC (502 aa).

6 consecutive transmembrane segments (helical) span residues 12–32, 286–306, 312–332, 382–402, 409–429, and 452–472; these read FLIFTILMFLFITAYELFYIY, LDWGTLKIIVKPLFLFLYWIY, WVLSILVLTFIVRIFLFPLGY, LPILLQIPIFFALYKVLIITV, FLWIPSLADKDPYYILPVIMG, and ITSVAFTLLFINFPAGLVLYW.

The protein belongs to the OXA1/ALB3/YidC family. Type 1 subfamily. In terms of assembly, interacts with the Sec translocase complex via SecD. Specifically interacts with transmembrane segments of nascent integral membrane proteins during membrane integration.

The protein localises to the cell membrane. Its function is as follows. Required for the insertion and/or proper folding and/or complex formation of integral membrane proteins into the membrane. Involved in integration of membrane proteins that insert both dependently and independently of the Sec translocase complex, as well as at least some lipoproteins. Aids folding of multispanning membrane proteins. The chain is Membrane protein insertase YidC from Aquifex aeolicus (strain VF5).